Reading from the N-terminus, the 227-residue chain is 7-cyano-7-deazaguanine synthase (227 aa).

Position 8-18 (Val8–Leu18) interacts with ATP. The Zn(2+) site is built by Cys192, Cys202, Cys205, and Cys208.

It belongs to the QueC family. Zn(2+) is required as a cofactor.

It catalyses the reaction 7-carboxy-7-deazaguanine + NH4(+) + ATP = 7-cyano-7-deazaguanine + ADP + phosphate + H2O + H(+). It participates in purine metabolism; 7-cyano-7-deazaguanine biosynthesis. Catalyzes the ATP-dependent conversion of 7-carboxy-7-deazaguanine (CDG) to 7-cyano-7-deazaguanine (preQ(0)). This chain is 7-cyano-7-deazaguanine synthase, found in Rickettsia canadensis (strain McKiel).